Consider the following 439-residue polypeptide: Xaa-Pro dipeptidase (439 aa).

The Mn(2+) site is built by Asp244, Asp255, His335, Glu380, and Glu419.

The protein belongs to the peptidase M24B family. Bacterial-type prolidase subfamily. The cofactor is Mn(2+).

It catalyses the reaction Xaa-L-Pro dipeptide + H2O = an L-alpha-amino acid + L-proline. Functionally, splits dipeptides with a prolyl residue in the C-terminal position. The polypeptide is Xaa-Pro dipeptidase (Shewanella amazonensis (strain ATCC BAA-1098 / SB2B)).